The following is a 114-amino-acid chain: Cytokine SCM-1 beta (114 aa).

Residues 1 to 21 (MRLLILALLGICSLTAYIVEG) form the signal peptide. Cysteines 32 and 69 form a disulfide. Positions 91-114 (RNNMIQTKPTGTQQSTNTAVTLTG) are disordered.

It belongs to the intercrine gamma family.

The protein resides in the secreted. In terms of biological role, chemotactic activity for lymphocytes but not for monocytes or neutrophils. The chain is Cytokine SCM-1 beta (XCL2) from Homo sapiens (Human).